A 519-amino-acid polypeptide reads, in one-letter code: MEEAKKDDSLSNVAEYSVSEISHALKRTIEDTFGHVRVRGEISGFRGAHSSGHCYFSLKDERARMEAVIWKTTFARLRFPPQEGLEVIATGRLTTFPGSSKYQIVIESLEPAGAGALMALLEERKRKLAAEGLFAESRKRPLPFMPHVIGVVTSPTGAVIRDIIHRITDRFPVHVVVWPVRVQGETTGAEVAAAISGFNALQPGGTIPRPDILIVARGGGSLEDLWGFNDEAVVRAAAASAIPLISAVGHETDWTLIDLAADRRAPTPTGAAEVAVPVKAELEANIARLSARLKGAISRCLDRRRQETRSLARALPSPDQLFALPRRRFDEAAGRLGRALQTSTQGKRLHLNAVRVSIATLDRRIAQARRDANQCGERLPLVYQGLVRHRRARFDRDAARVSPRVTLQRITTLGERLKIAIARKDRAVSLRVERARTVYEQAVRLAESLSYKSVLERGFALVRDGEDRPLKRASDVKPGETLRLQFADGNIGAISTGKSSNTNRKSAPAREPGKQGSLF.

Residues 493–519 (AISTGKSSNTNRKSAPAREPGKQGSLF) form a disordered region. Over residues 496–505 (TGKSSNTNRK) the composition is skewed to polar residues.

It belongs to the XseA family. In terms of assembly, heterooligomer composed of large and small subunits.

The protein resides in the cytoplasm. The enzyme catalyses Exonucleolytic cleavage in either 5'- to 3'- or 3'- to 5'-direction to yield nucleoside 5'-phosphates.. In terms of biological role, bidirectionally degrades single-stranded DNA into large acid-insoluble oligonucleotides, which are then degraded further into small acid-soluble oligonucleotides. This chain is Exodeoxyribonuclease 7 large subunit, found in Chelativorans sp. (strain BNC1).